The chain runs to 177 residues: Large ribosomal subunit protein uL6 (177 aa).

This sequence belongs to the universal ribosomal protein uL6 family. As to quaternary structure, part of the 50S ribosomal subunit.

This protein binds to the 23S rRNA, and is important in its secondary structure. It is located near the subunit interface in the base of the L7/L12 stalk, and near the tRNA binding site of the peptidyltransferase center. The polypeptide is Large ribosomal subunit protein uL6 (Actinobacillus pleuropneumoniae serotype 5b (strain L20)).